Reading from the N-terminus, the 204-residue chain is Holliday junction branch migration complex subunit RuvA (204 aa).

Residues 1–63 (MIGWLQGRVL…EDGQFLYGFS (63 aa)) form a domain I region. The interval 64–142 (SFLQRQLFRE…KNDLFLCDES (79 aa)) is domain II. The tract at residues 143–152 (ESSRAPIALS) is flexible linker. The domain III stretch occupies residues 152–204 (SASEEAIQALIALELAPAEAELWVKKAQKTLAEDADSAALIKTAFALRLQGAK).

The protein belongs to the RuvA family. As to quaternary structure, homotetramer. Forms an RuvA(8)-RuvB(12)-Holliday junction (HJ) complex. HJ DNA is sandwiched between 2 RuvA tetramers; dsDNA enters through RuvA and exits via RuvB. An RuvB hexamer assembles on each DNA strand where it exits the tetramer. Each RuvB hexamer is contacted by two RuvA subunits (via domain III) on 2 adjacent RuvB subunits; this complex drives branch migration. In the full resolvosome a probable DNA-RuvA(4)-RuvB(12)-RuvC(2) complex forms which resolves the HJ.

The protein localises to the cytoplasm. The RuvA-RuvB-RuvC complex processes Holliday junction (HJ) DNA during genetic recombination and DNA repair, while the RuvA-RuvB complex plays an important role in the rescue of blocked DNA replication forks via replication fork reversal (RFR). RuvA specifically binds to HJ cruciform DNA, conferring on it an open structure. The RuvB hexamer acts as an ATP-dependent pump, pulling dsDNA into and through the RuvAB complex. HJ branch migration allows RuvC to scan DNA until it finds its consensus sequence, where it cleaves and resolves the cruciform DNA. The protein is Holliday junction branch migration complex subunit RuvA of Dichelobacter nodosus (strain VCS1703A).